A 411-amino-acid polypeptide reads, in one-letter code: Putative nickel insertion protein (411 aa).

It belongs to the LarC family.

This chain is Putative nickel insertion protein, found in Acaryochloris marina (strain MBIC 11017).